The chain runs to 105 residues: UPF0045 protein ECM15 (105 aa).

This sequence belongs to the UPF0045 family.

The chain is UPF0045 protein ECM15 (ECM15) from Eremothecium gossypii (strain ATCC 10895 / CBS 109.51 / FGSC 9923 / NRRL Y-1056) (Yeast).